Reading from the N-terminus, the 240-residue chain is Triosephosphate isomerase (240 aa).

Position 9-11 (9-11) interacts with substrate; the sequence is NWK. H94 functions as the Electrophile in the catalytic mechanism. E163 serves as the catalytic Proton acceptor. Substrate is bound by residues G169, S202, and 223–224; that span reads GG.

This sequence belongs to the triosephosphate isomerase family. Homodimer.

The protein localises to the cytoplasm. It catalyses the reaction D-glyceraldehyde 3-phosphate = dihydroxyacetone phosphate. Its pathway is carbohydrate biosynthesis; gluconeogenesis. It functions in the pathway carbohydrate degradation; glycolysis; D-glyceraldehyde 3-phosphate from glycerone phosphate: step 1/1. Involved in the gluconeogenesis. Catalyzes stereospecifically the conversion of dihydroxyacetone phosphate (DHAP) to D-glyceraldehyde-3-phosphate (G3P). This is Triosephosphate isomerase from Gloeobacter violaceus (strain ATCC 29082 / PCC 7421).